The primary structure comprises 100 residues: Large ribosomal subunit protein bL28 (100 aa).

The protein belongs to the bacterial ribosomal protein bL28 family.

The polypeptide is Large ribosomal subunit protein bL28 (Gluconobacter oxydans (strain 621H) (Gluconobacter suboxydans)).